Reading from the N-terminus, the 502-residue chain is Pyruvate kinase (502 aa).

R54 contacts substrate. Residues N56, S58, D88, and T89 each coordinate K(+). ATP is bound at residue 56 to 59 (NFSH). Residues R95 and K184 each contribute to the ATP site. Residue E252 participates in Mg(2+) binding. Residues G275, D276, and T308 each contribute to the substrate site. A Mg(2+)-binding site is contributed by D276.

It belongs to the pyruvate kinase family. In terms of assembly, homotetramer. Requires Mg(2+) as cofactor. K(+) serves as cofactor.

The catalysed reaction is pyruvate + ATP = phosphoenolpyruvate + ADP + H(+). Its pathway is carbohydrate degradation; glycolysis; pyruvate from D-glyceraldehyde 3-phosphate: step 5/5. With respect to regulation, regulated by phosphoenolpyruvate substrate and is allosterically activated by ribose-5-phosphate, AMP and other nucleoside monophosphates but not by fructose-1,6-bisphosphate. In Lactococcus lactis subsp. lactis (strain IL1403) (Streptococcus lactis), this protein is Pyruvate kinase (pyk).